The sequence spans 450 residues: Protein DA1-related 3 (450 aa).

The stretch at 1-46 (MVRRKRQEEDEKIEIERVKEESLKLAKQAEEKRRLEESKEQGKRIQ) forms a coiled coil. 2 stretches are compositionally biased toward basic and acidic residues: residues 27–47 (KQAE…RIQV) and 56–69 (TSKD…SKDV). The interval 27 to 87 (KQAEEKRRLE…PSIDGKSEIG (61 aa)) is disordered.

This Arabidopsis thaliana (Mouse-ear cress) protein is Protein DA1-related 3 (DAR3).